We begin with the raw amino-acid sequence, 379 residues long: Pectin lyase A (379 aa).

Residues 1-20 form the signal peptide; it reads MKYSTIFSAAAAVFAGSAAA. 2 disulfide bridges follow: Cys-83-Cys-102 and Cys-92-Cys-226. An O-linked (Man) threonine glycan is attached at Thr-88. The N-linked (GlcNAc...) asparagine glycan is linked to Asn-129. The active site involves Arg-256. A disulfide bridge links Cys-322 with Cys-330. Ser-368 carries O-linked (Man) serine; in strain 4M-147 glycosylation.

This sequence belongs to the polysaccharide lyase 1 family. N-glycosylated at Asn-129 and O-glycosylated at Thr-88 when expressed in Aspergillus nidulans. The protein from strain 4M-147 is O-glycosylated at Thr-88 and Ser-368. PubMed:9195887 modeled GalNAc at the O-glycosylation site, a glycosylation not observed in fungi. The O-linked saccharide is probably mannose.

The protein resides in the secreted. It catalyses the reaction Eliminative cleavage of (1-&gt;4)-alpha-D-galacturonan methyl ester to give oligosaccharides with 4-deoxy-6-O-methyl-alpha-D-galact-4-enuronosyl groups at their non-reducing ends.. Its function is as follows. Pectinolytic enzymes consist of four classes of enzymes: pectin lyase, polygalacturonase, pectin methylesterase and rhamnogalacturonase. Among pectinolytic enzymes, pectin lyase is the most important in depolymerization of pectin, since it cleaves internal glycosidic bonds of highly methylated pectins. In Aspergillus niger, this protein is Pectin lyase A (pelA).